The chain runs to 478 residues: MLO-like protein 13 (478 aa).

The Extracellular segment spans residues methionine 1–glutamate 10. Residues tyrosine 11–alanine 31 traverse the membrane as a helical segment. Topologically, residues glutamate 32 to glutamate 60 are cytoplasmic. Residues leucine 61–isoleucine 81 form a helical membrane-spanning segment. Topologically, residues cysteine 82–histidine 145 are extracellular. Residues isoleucine 146–glycine 166 traverse the membrane as a helical segment. Topologically, residues glycine 167–lysine 276 are cytoplasmic. Transmembrane regions (helical) follow at residues valine 277 to glycine 297 and glycine 298 to alanine 318. Residues lysine 319–glutamine 360 are Cytoplasmic-facing. The chain crosses the membrane as a helical span at residues leucine 361–phenylalanine 381. The Extracellular segment spans residues threonine 382 to leucine 400. Residues valine 401–valine 421 traverse the membrane as a helical segment. The Cytoplasmic segment spans residues threonine 422–proline 478. Positions asparagine 435–serine 456 are calmodulin-binding. The segment covering arginine 449–glutamate 462 has biased composition (basic and acidic residues). Residues arginine 449–proline 478 form a disordered region. Over residues glutamine 464–proline 478 the composition is skewed to polar residues.

The protein belongs to the MLO family.

Its subcellular location is the membrane. Functionally, may be involved in modulation of pathogen defense and leaf cell death. Activity seems to be regulated by Ca(2+)-dependent calmodulin binding and seems not to require heterotrimeric G proteins. In Arabidopsis thaliana (Mouse-ear cress), this protein is MLO-like protein 13 (MLO13).